A 258-amino-acid chain; its full sequence is Hydroxyacylglutathione hydrolase (258 aa).

Zn(2+)-binding residues include H56, H58, D60, H61, H112, D132, and H170.

It belongs to the metallo-beta-lactamase superfamily. Glyoxalase II family. As to quaternary structure, monomer. The cofactor is Zn(2+).

It carries out the reaction an S-(2-hydroxyacyl)glutathione + H2O = a 2-hydroxy carboxylate + glutathione + H(+). The protein operates within secondary metabolite metabolism; methylglyoxal degradation; (R)-lactate from methylglyoxal: step 2/2. In terms of biological role, thiolesterase that catalyzes the hydrolysis of S-D-lactoyl-glutathione to form glutathione and D-lactic acid. The polypeptide is Hydroxyacylglutathione hydrolase (Pseudomonas paraeruginosa (strain DSM 24068 / PA7) (Pseudomonas aeruginosa (strain PA7))).